The chain runs to 176 residues: Large ribosomal subunit protein uL10 (176 aa).

The protein belongs to the universal ribosomal protein uL10 family. As to quaternary structure, part of the ribosomal stalk of the 50S ribosomal subunit. The N-terminus interacts with L11 and the large rRNA to form the base of the stalk. The C-terminus forms an elongated spine to which L12 dimers bind in a sequential fashion forming a multimeric L10(L12)X complex.

Functionally, forms part of the ribosomal stalk, playing a central role in the interaction of the ribosome with GTP-bound translation factors. This is Large ribosomal subunit protein uL10 from Coprothermobacter proteolyticus (strain ATCC 35245 / DSM 5265 / OCM 4 / BT).